A 268-amino-acid polypeptide reads, in one-letter code: DNA repair protein RecO (268 aa).

It belongs to the RecO family.

Functionally, involved in DNA repair and RecF pathway recombination. The protein is DNA repair protein RecO of Parasynechococcus marenigrum (strain WH8102).